The primary structure comprises 1262 residues: Structural maintenance of chromosomes protein 1 (1262 aa).

The stretch at 171-497 forms a coiled coil; sequence SRSHEFQAEY…VAVVRQLSEA (327 aa). Positions 524–642 constitute an SMC hinge domain; sequence SVYGRLVDLC…ESQEDAKQLA (119 aa). The stretch at 680–937 forms a coiled coil; sequence KKWDEKVVKQ…RLESLLTKKQ (258 aa). A disordered region spans residues 965–994; sequence EYEEDDGDDTASQSSQSATDGPSVSEEQIQ. A compositionally biased stretch (polar residues) spans 974–991; the sequence is TASQSSQSATDGPSVSEE. Positions 1017-1086 form a coiled coil; the sequence is DGVRQMSNRL…QQFEKVKTDR (70 aa). The short motif at 1148-1183 is the DA-box element; it reads LSGGEKTIAALALLFAVHGRNPAPFFVLDEIDAALD.

Belongs to the SMC family. SMC1 subfamily. In terms of assembly, component of the cohesin complex, composed of the smc-1 and smc-3 heterodimer attached via their SMC hinge domain, scc-1 which links them, and scc-3. Interacts with smc-3, scc-1, scc-3 and tim-1.

It is found in the nucleus. Its subcellular location is the chromosome. In terms of biological role, involved in chromosome cohesion during cell cycle and in DNA repair. Required for chromosome segregation during mitosis. Central component of cohesin complex. The cohesin complex is required for the cohesion of sister chromatids after DNA replication. The cohesin complex apparently forms a large proteinaceous ring within which sister chromatids can be trapped. At anaphase, the complex is cleaved and dissociates from chromatin, allowing sister chromatids to segregate. The polypeptide is Structural maintenance of chromosomes protein 1 (Caenorhabditis elegans).